Reading from the N-terminus, the 473-residue chain is Chromosomal replication initiator protein DnaA (473 aa).

The domain I, interacts with DnaA modulators stretch occupies residues 1–73 (MTNIEQDRWS…LSCWQAEMPQ (73 aa)). A domain II region spans residues 73-129 (QVHRVDLTVRTAMRCAAPAKDAPAHAEPRRDDGRPAPELRATAIAPVSATHEALGGS). The segment at 130-352 (PLDPRLTFGS…GAINRLLAHS (223 aa)) is domain III, AAA+ region. ATP is bound by residues G177, G179, K180, and T181. The interval 353 to 473 (KLNAQPVTLE…VELLKRQLQE (121 aa)) is domain IV, binds dsDNA.

This sequence belongs to the DnaA family. As to quaternary structure, oligomerizes as a right-handed, spiral filament on DNA at oriC.

It is found in the cytoplasm. Plays an essential role in the initiation and regulation of chromosomal replication. ATP-DnaA binds to the origin of replication (oriC) to initiate formation of the DNA replication initiation complex once per cell cycle. Binds the DnaA box (a 9 base pair repeat at the origin) and separates the double-stranded (ds)DNA. Forms a right-handed helical filament on oriC DNA; dsDNA binds to the exterior of the filament while single-stranded (ss)DNA is stabiized in the filament's interior. The ATP-DnaA-oriC complex binds and stabilizes one strand of the AT-rich DNA unwinding element (DUE), permitting loading of DNA polymerase. After initiation quickly degrades to an ADP-DnaA complex that is not apt for DNA replication. Binds acidic phospholipids. This is Chromosomal replication initiator protein DnaA from Rhodopseudomonas palustris (strain BisB18).